We begin with the raw amino-acid sequence, 137 residues long: Holo-[acyl-carrier-protein] synthase (137 aa).

The Mg(2+) site is built by Asp8 and Glu57.

Belongs to the P-Pant transferase superfamily. AcpS family. It depends on Mg(2+) as a cofactor.

It is found in the cytoplasm. It carries out the reaction apo-[ACP] + CoA = holo-[ACP] + adenosine 3',5'-bisphosphate + H(+). In terms of biological role, transfers the 4'-phosphopantetheine moiety from coenzyme A to a Ser of acyl-carrier-protein. This is Holo-[acyl-carrier-protein] synthase from Cereibacter sphaeroides (strain ATCC 17023 / DSM 158 / JCM 6121 / CCUG 31486 / LMG 2827 / NBRC 12203 / NCIMB 8253 / ATH 2.4.1.) (Rhodobacter sphaeroides).